A 211-amino-acid chain; its full sequence is Transcriptional regulatory protein LiaR (211 aa).

The Response regulatory domain maps to 3-119 (RVLLIDDHEM…EIADAIRAAS (117 aa)). Asp-54 is subject to 4-aspartylphosphate. One can recognise an HTH luxR-type domain in the interval 143–208 (NALPHESLTK…QAAVYAHRNH (66 aa)). Positions 167–186 (NKEIGEELFITIKTVKTHIT) form a DNA-binding region, H-T-H motif.

Phosphorylated by LiaS.

The protein localises to the cytoplasm. Its function is as follows. Member of the two-component regulatory system LiaS/LiaR probably involved in response to a subset of cell wall-active antibiotics that interfere with the lipid II cycle in the cytoplasmic membrane (bacitracin, nisin, ramoplanin and vancomycin). Also seems to be involved in response to cationic antimicrobial peptides and secretion stress. LiaR regulates the transcription of the liaIHGFSR operon. The chain is Transcriptional regulatory protein LiaR (liaR) from Bacillus subtilis (strain 168).